We begin with the raw amino-acid sequence, 227 residues long: Urease accessory protein UreG (227 aa).

The segment covering 1 to 10 (MHLDHAHTHD) has biased composition (basic and acidic residues). The tract at residues 1–22 (MHLDHAHTHDGPSAVSADAHRP) is disordered. Residue 35–42 (GPVGSGKT) participates in GTP binding.

Belongs to the SIMIBI class G3E GTPase family. UreG subfamily. Homodimer. UreD, UreF and UreG form a complex that acts as a GTP-hydrolysis-dependent molecular chaperone, activating the urease apoprotein by helping to assemble the nickel containing metallocenter of UreC. The UreE protein probably delivers the nickel.

It localises to the cytoplasm. Its function is as follows. Facilitates the functional incorporation of the urease nickel metallocenter. This process requires GTP hydrolysis, probably effectuated by UreG. The polypeptide is Urease accessory protein UreG (Streptomyces avermitilis (strain ATCC 31267 / DSM 46492 / JCM 5070 / NBRC 14893 / NCIMB 12804 / NRRL 8165 / MA-4680)).